A 436-amino-acid chain; its full sequence is UPF0597 protein YhaM (436 aa).

It belongs to the UPF0597 family.

This Salmonella paratyphi C (strain RKS4594) protein is UPF0597 protein YhaM.